The primary structure comprises 483 residues: Regulatory protein ViaA (483 aa).

It belongs to the ViaA family. In terms of assembly, homodimer. Interacts with RavA.

It is found in the cytoplasm. Component of the RavA-ViaA chaperone complex, which may act on the membrane to optimize the function of some of the respiratory chains. ViaA stimulates the ATPase activity of RavA. This chain is Regulatory protein ViaA, found in Escherichia coli O17:K52:H18 (strain UMN026 / ExPEC).